We begin with the raw amino-acid sequence, 370 residues long: Actin-related protein 2/3 complex subunit 1A (370 aa).

6 WD repeats span residues 6 to 45 (FLLE…WTKA), 50 to 89 (EHNG…WKPT), 140 to 179 (PIRS…VDEK), 202 to 241 (GTGG…QVST), 244 to 284 (TEFL…TFVS), and 322 to 365 (LHQN…SSIQ).

This sequence belongs to the WD repeat ARPC1 family. Probable component of the Arp2/3 complex in which it may replace ARPC1B.

It localises to the cytoplasm. The protein localises to the cytoskeleton. It is found in the nucleus. Probably functions as a component of the Arp2/3 complex which is involved in regulation of actin polymerization and together with an activating nucleation-promoting factor (NPF) mediates the formation of branched actin networks. In addition to its role in the cytoplasmic cytoskeleton, the Arp2/3 complex also promotes actin polymerization in the nucleus, thereby regulating gene transcription and repair of damaged DNA. The protein is Actin-related protein 2/3 complex subunit 1A (Arpc1a) of Mus musculus (Mouse).